Consider the following 150-residue polypeptide: UPF0178 protein Bcep18194_A4809 (150 aa).

It belongs to the UPF0178 family.

This Burkholderia lata (strain ATCC 17760 / DSM 23089 / LMG 22485 / NCIMB 9086 / R18194 / 383) protein is UPF0178 protein Bcep18194_A4809.